A 537-amino-acid polypeptide reads, in one-letter code: Phosphoenolpyruvate carboxykinase (ATP) (537 aa).

Residues Arg61, Tyr195, and Lys201 each coordinate substrate. ATP-binding positions include Lys201, His220, and 236 to 244 (GLSGTGKTT). The Mn(2+) site is built by Lys201 and His220. Asp257 is a binding site for Mn(2+). 3 residues coordinate ATP: Glu285, Arg323, and Thr448. Arg323 contributes to the substrate binding site.

The protein belongs to the phosphoenolpyruvate carboxykinase (ATP) family. Mn(2+) serves as cofactor.

The protein localises to the cytoplasm. The catalysed reaction is oxaloacetate + ATP = phosphoenolpyruvate + ADP + CO2. Its pathway is carbohydrate biosynthesis; gluconeogenesis. Its function is as follows. Involved in the gluconeogenesis. Catalyzes the conversion of oxaloacetate (OAA) to phosphoenolpyruvate (PEP) through direct phosphoryl transfer between the nucleoside triphosphate and OAA. The sequence is that of Phosphoenolpyruvate carboxykinase (ATP) from Rhodopseudomonas palustris (strain ATCC BAA-98 / CGA009).